We begin with the raw amino-acid sequence, 228 residues long: Cytochrome b5 domain-containing protein 1 (228 aa).

The Cytochrome b5 heme-binding domain maps to 17–83 (RRYFTPAEVA…DPKTRDIRKH (67 aa)). Heme-binding residues include Y52 and H83.

The protein belongs to the cytochrome b5 family.

It is found in the cytoplasm. It localises to the cytoskeleton. The protein localises to the cilium axoneme. Functionally, radial spoke stalk protein that binds heme under oxidizing conditions. Required for the coordinated beating of multiple cilia maybe by functioning in a redox signaling pathway. In Homo sapiens (Human), this protein is Cytochrome b5 domain-containing protein 1.